We begin with the raw amino-acid sequence, 350 residues long: Homoserine O-succinyltransferase (350 aa).

Residue Cys146 is the Acyl-thioester intermediate of the active site. Substrate is bound by residues Lys167 and Ser196. His239 acts as the Proton acceptor in catalysis. The active site involves Glu241. Arg253 provides a ligand contact to substrate.

Belongs to the MetA family.

The protein localises to the cytoplasm. It carries out the reaction L-homoserine + succinyl-CoA = O-succinyl-L-homoserine + CoA. It participates in amino-acid biosynthesis; L-methionine biosynthesis via de novo pathway; O-succinyl-L-homoserine from L-homoserine: step 1/1. Transfers a succinyl group from succinyl-CoA to L-homoserine, forming succinyl-L-homoserine. In Cardiobacterium hominis (strain ATCC 15826 / DSM 8339 / NCTC 10426 / 6573), this protein is Homoserine O-succinyltransferase.